Reading from the N-terminus, the 770-residue chain is MDFSKFLAEDFDVKEWINAAFRAGPKEAAAGKADSHAATLVMKLQLFIQEVNHAVEETSHQALQNMPKVLRDVEALKQEASFLKEQMILVKEDIKKFEQDTSQSMQVLVEIDQVKSRMQLAAESLQEADKWSTLSADIEETFKTQDIAVISAKLTGMQNSLMMLVDTPDYSEKCVHLEALKNRLEALASPQIVAAFTSQSIDQSKMFVKVFSEIDRMPQLLAYYYKCHKVQLLAAWQELCQTDLPLDRQLTGLYDALLGAWHAQIQWASQVFKNPHDVVTVLLIQTLGALVPSLPVCLSSGVERAGPELELVKLLEFYDATAHFAKGLEMALLPHAYEQNLVKVMELVDAVYGPYKPYQLKYGDMEEKYLLIQFSEVPLEHGEVIDCVQELSHSVNKLFGLSSAAVDRCIRFTSGLGTCGLLTALKSLFAKYVSDFTSTLHSIRKKYRLDDIPLNSLFQEDWTAFQNSIRIIATCGELLRQCGDFEQQLANRILSTAGKYLSDSFSPRSLTGFQDSILTDKKSSAKNPWQEYNYLQKDSPAEYGSLMEILYTLKEKGSSNHHLLSASRSALTRLNQQAHQLAFDSVFLRIKQQLLLIPKMDSWNTAGIGETLTDDLPTFSLTPLEYISNIGQYIMSLPLNLEPFVTQEDSALELALHAGKLPFPPEQGDELPELDNMADNWLGSIARATMQTYCDAILQIPELTPHSTKQLATDIDYLINVMDALGLQPSRTLQNIVMLLKAKPEDYRQVSKGLPRRLATTVATMRSVDY.

This sequence belongs to the COG7 family. As to quaternary structure, component of the conserved oligomeric Golgi complex which is composed of eight different subunits and is required for normal Golgi morphology and localization.

It localises to the golgi apparatus membrane. Functionally, required for normal Golgi function. The sequence is that of Conserved oligomeric Golgi complex subunit 7 (COG7) from Bos taurus (Bovine).